Consider the following 259-residue polypeptide: Ubiquinone/menaquinone biosynthesis C-methyltransferase UbiE (259 aa).

Residues Thr82, Asp103, 131–132 (NA), and Ser148 each bind S-adenosyl-L-methionine.

This sequence belongs to the class I-like SAM-binding methyltransferase superfamily. MenG/UbiE family.

The enzyme catalyses a 2-demethylmenaquinol + S-adenosyl-L-methionine = a menaquinol + S-adenosyl-L-homocysteine + H(+). It carries out the reaction a 2-methoxy-6-(all-trans-polyprenyl)benzene-1,4-diol + S-adenosyl-L-methionine = a 5-methoxy-2-methyl-3-(all-trans-polyprenyl)benzene-1,4-diol + S-adenosyl-L-homocysteine + H(+). It participates in quinol/quinone metabolism; menaquinone biosynthesis; menaquinol from 1,4-dihydroxy-2-naphthoate: step 2/2. It functions in the pathway cofactor biosynthesis; ubiquinone biosynthesis. Functionally, methyltransferase required for the conversion of demethylmenaquinol (DMKH2) to menaquinol (MKH2) and the conversion of 2-polyprenyl-6-methoxy-1,4-benzoquinol (DDMQH2) to 2-polyprenyl-3-methyl-6-methoxy-1,4-benzoquinol (DMQH2). This Vibrio parahaemolyticus serotype O3:K6 (strain RIMD 2210633) protein is Ubiquinone/menaquinone biosynthesis C-methyltransferase UbiE.